The chain runs to 521 residues: Cytochrome b5 reductase 4 (521 aa).

Position 1 is an N-acetylmethionine (Met1). A compositionally biased stretch (polar residues) spans 1-18 (MLNVPSQSFPAPRSQQRV). Residues 1–27 (MLNVPSQSFPAPRSQQRVASGGRSKVP) are disordered. The Cytochrome b5 heme-binding domain maps to 54–130 (LIEVTEEELK…LKECLVGRMA (77 aa)). 2 residues coordinate heme: His89 and His112. The 92-residue stretch at 165–256 (PSYPSYDWFQ…KENTSWDFLG (92 aa)) folds into the CS domain. One can recognise an FAD-binding FR-type domain in the interval 273–385 (LYYRKCQLIS…SSPEGNFKIS (113 aa)). Residues 365-380 (DRLQIGDFVSVSSPEG) and 392-424 (DLFLLAAGTGFTPMVKILNYALTDIPSLRKVKL) each bind FAD.

Belongs to the flavoprotein pyridine nucleotide cytochrome reductase family. Requires FAD as cofactor. As to expression, widely expressed.

It localises to the endoplasmic reticulum. The enzyme catalyses 2 Fe(III)-[cytochrome b5] + NADH = 2 Fe(II)-[cytochrome b5] + NAD(+) + H(+). NADH-cytochrome b5 reductase involved in endoplasmic reticulum stress response pathway. Plays a critical role in protecting pancreatic beta-cells against oxidant stress, possibly by protecting the cell from excess buildup of reactive oxygen species (ROS). Reduces a variety of substrates in vitro, such as cytochrome c, feericyanide and methemoglobin. This chain is Cytochrome b5 reductase 4, found in Homo sapiens (Human).